An 868-amino-acid polypeptide reads, in one-letter code: DNA mismatch repair protein MutS (868 aa).

Position 620 to 627 (620 to 627 (GPNMGGKS)) interacts with ATP.

Belongs to the DNA mismatch repair MutS family.

Its function is as follows. This protein is involved in the repair of mismatches in DNA. It is possible that it carries out the mismatch recognition step. This protein has a weak ATPase activity. The chain is DNA mismatch repair protein MutS from Desulforamulus reducens (strain ATCC BAA-1160 / DSM 100696 / MI-1) (Desulfotomaculum reducens).